The sequence spans 342 residues: Nucleoid-associated protein Sfri_2491 (342 aa).

Belongs to the YejK family.

It is found in the cytoplasm. The protein resides in the nucleoid. This Shewanella frigidimarina (strain NCIMB 400) protein is Nucleoid-associated protein Sfri_2491.